The chain runs to 406 residues: Cysteine desulfurase (406 aa).

K226 is modified (N6-(pyridoxal phosphate)lysine). The Cysteine persulfide intermediate role is filled by C364.

It belongs to the class-V pyridoxal-phosphate-dependent aminotransferase family. Csd subfamily. Homodimer. Interacts with SufE and the SufBCD complex composed of SufB, SufC and SufD. The interaction with SufE is required to mediate the direct transfer of the sulfur atom from the S-sulfanylcysteine. Pyridoxal 5'-phosphate serves as cofactor.

It is found in the cytoplasm. It carries out the reaction (sulfur carrier)-H + L-cysteine = (sulfur carrier)-SH + L-alanine. The catalysed reaction is L-selenocysteine + AH2 = hydrogenselenide + L-alanine + A + H(+). Its pathway is cofactor biosynthesis; iron-sulfur cluster biosynthesis. Cysteine desulfurases mobilize the sulfur from L-cysteine to yield L-alanine, an essential step in sulfur metabolism for biosynthesis of a variety of sulfur-containing biomolecules. Component of the suf operon, which is activated and required under specific conditions such as oxidative stress and iron limitation. Acts as a potent selenocysteine lyase in vitro, that mobilizes selenium from L-selenocysteine. Selenocysteine lyase activity is however unsure in vivo. The chain is Cysteine desulfurase from Serratia proteamaculans (strain 568).